The following is a 174-amino-acid chain: Bifunctional protein PyrR (174 aa).

Positions 97–109 (VVIVDDVLYTGRT) match the PRPP-binding motif.

The protein belongs to the purine/pyrimidine phosphoribosyltransferase family. PyrR subfamily. As to quaternary structure, homodimer and homohexamer; in equilibrium.

The catalysed reaction is UMP + diphosphate = 5-phospho-alpha-D-ribose 1-diphosphate + uracil. Regulates transcriptional attenuation of the pyrimidine nucleotide (pyr) operon by binding in a uridine-dependent manner to specific sites on pyr mRNA. This disrupts an antiterminator hairpin in the RNA and favors formation of a downstream transcription terminator, leading to a reduced expression of downstream genes. Its function is as follows. Also displays a weak uracil phosphoribosyltransferase activity which is not physiologically significant. The chain is Bifunctional protein PyrR from Macrococcus caseolyticus (strain JCSC5402) (Macrococcoides caseolyticum).